We begin with the raw amino-acid sequence, 173 residues long: Photosystem I assembly protein Ycf3 (173 aa).

TPR repeat units follow at residues 35-68 (AFVY…EEDT), 72-105 (GYIL…NPRL), and 120-153 (GEKA…APNN).

Belongs to the Ycf3 family.

The protein resides in the cellular thylakoid membrane. Essential for the assembly of the photosystem I (PSI) complex. May act as a chaperone-like factor to guide the assembly of the PSI subunits. The sequence is that of Photosystem I assembly protein Ycf3 from Nostoc sp. (strain PCC 7120 / SAG 25.82 / UTEX 2576).